The primary structure comprises 600 residues: Putative DNA 3'-5' helicase Rad25 (600 aa).

The Helicase ATP-binding domain maps to 253–402 (VDRFEDASAG…DIYTLVGRPI (150 aa)). 266 to 273 (GPPGSGKT) is an ATP binding site. The short motif at 356–359 (DEVH) is the DEAH box element. The region spanning 457 to 600 (EIEHLVDQHG…VTESDASHSP (144 aa)) is the Helicase C-terminal domain. The segment at 569–600 (RGTEEEDHARSRMRHLSTKGVRVTESDASHSP) is disordered. A compositionally biased stretch (basic and acidic residues) spans 590 to 600 (RVTESDASHSP).

This sequence belongs to the helicase family. RAD25/XPB subfamily.

It catalyses the reaction Couples ATP hydrolysis with the unwinding of duplex DNA by translocating in the 3'-5' direction.. It carries out the reaction ATP + H2O = ADP + phosphate + H(+). In Halobacterium salinarum (strain ATCC 700922 / JCM 11081 / NRC-1) (Halobacterium halobium), this protein is Putative DNA 3'-5' helicase Rad25.